The following is a 191-amino-acid chain: NAD(P)H-quinone oxidoreductase subunit L, chloroplastic (191 aa).

The N-terminal 46 residues, 1–46, are a transit peptide targeting the chloroplast; it reads MSRCGSLGLYAPNALPSLSLKPRSVKSPFCITSHTKPNDTLLHNVN. The next 3 membrane-spanning stretches (helical) occupy residues 61 to 81, 93 to 113, and 129 to 149; these read TILA…ALAI, VVLD…PIIM, and YLQF…APFL.

This sequence belongs to the NDH complex subunit L family. As to quaternary structure, part of the chloroplast NDH complex, composed of a mixture of chloroplast and nucleus encoded subunits. Component of the NDH subcomplex A, at least composed of ndhH, ndhI, ndhJ, ndhK, ndhL, ndhM, ndhN and ndhO.

Its subcellular location is the plastid. The protein resides in the chloroplast thylakoid membrane. The enzyme catalyses a plastoquinone + NADH + (n+1) H(+)(in) = a plastoquinol + NAD(+) + n H(+)(out). It catalyses the reaction a plastoquinone + NADPH + (n+1) H(+)(in) = a plastoquinol + NADP(+) + n H(+)(out). Functionally, NDH shuttles electrons from NAD(P)H:plastoquinone, via FMN and iron-sulfur (Fe-S) centers, to quinones in the photosynthetic chain and possibly in a chloroplast respiratory chain. The immediate electron acceptor for the enzyme in this species is believed to be plastoquinone. Couples the redox reaction to proton translocation, and thus conserves the redox energy in a proton gradient. This Arabidopsis thaliana (Mouse-ear cress) protein is NAD(P)H-quinone oxidoreductase subunit L, chloroplastic.